A 646-amino-acid chain; its full sequence is Protein SENSITIVE TO UV 2 (646 aa).

Residues 42–70 (PAPPPSTKISSSLSHPMQLQSSAGQQRKQ) are disordered. Polar residues predominate over residues 48–70 (TKISSSLSHPMQLQSSAGQQRKQ). Positions 119 to 126 (NRRCDSEK) match the Nuclear localization signal motif. Residues 123-157 (DSEKDLEIDRLKKELERVSKQLLDVEQECSQLKKG) adopt a coiled-coil conformation. Residues 376–646 (KRTEQDVKQE…VFAFLGDNTI (271 aa)) form the Phosphatase tensin-type domain.

This sequence belongs to the serpin family. In terms of assembly, forms multimers through the coiled-coil domain. Probably phosphorylated by ATR. Accumulates throughout the root tip.

It is found in the nucleus. It localises to the cytoplasm. Its function is as follows. Required for tolerance to DNA-damaging and cross-linking agents such as UVB irradiation, gamma-radiation, aphidicolin, ionizing radiation and hydroxyurea (HU), cisplatin (CDDP) and mitomycin C (MMC). Involved in cell-cycle G2/M arrest in response to DNA damage. Required for aluminum-dependent gene regulation and root growth inhibition in an ATR-dependent manner by halting cell cycle progression and triggering loss of the quiescent center (QC). In Arabidopsis thaliana (Mouse-ear cress), this protein is Protein SENSITIVE TO UV 2.